Reading from the N-terminus, the 397-residue chain is Decapping and exoribonuclease protein (397 aa).

The segment covering 1–20 (MESRGTKREAGKIEVAEPRN) has biased composition (basic and acidic residues). The tract at residues 1–37 (MESRGTKREAGKIEVAEPRNKLPRPAPSLPTDPALYS) is disordered. Arg58 contributes to the substrate binding site. A disordered region spans residues 67 to 88 (LRYYSPPPTNGQSPNFDLRDGY). Residues Glu101 and 131-133 (WRG) each bind substrate. Residue Glu192 coordinates Mg(2+). Positions 217 and 234 each coordinate substrate. Positions 234, 236, 253, and 254 each coordinate Mg(2+). Substrate contacts are provided by Lys255 and Gln280. Thr392 is modified (phosphothreonine). Phosphoserine is present on Ser394.

It belongs to the DXO/Dom3Z family. Mg(2+) serves as cofactor.

It is found in the nucleus. It catalyses the reaction a 5'-end triphospho-ribonucleoside in mRNA + H2O = a 5'-end phospho-ribonucleoside in mRNA + diphosphate + H(+). The catalysed reaction is a 5'-end NAD(+)-phospho-ribonucleoside in mRNA + H2O = a 5'-end phospho-ribonucleoside in mRNA + NAD(+) + H(+). It carries out the reaction a 5'-end NAD(+)-phospho-ribonucleoside in snoRNA + H2O = a 5'-end phospho-ribonucleoside in snoRNA + NAD(+) + H(+). The enzyme catalyses a 5'-end (N(7)-methyl 5'-triphosphoguanosine)-ribonucleoside-ribonucleotide in mRNA + H2O = a (N(7)-methyl 5'-triphosphoguanosine)-nucleoside + a 5'-end phospho-ribonucleoside in mRNA + H(+). It catalyses the reaction a 5'-end FAD-phospho-ribonucleoside in mRNA + H2O = a 5'-end phospho-ribonucleoside in mRNA + FAD + H(+). The catalysed reaction is a 5'-end CoA-ribonucleoside in mRNA + H2O = 3'-dephospho-CoA + a 5'-end phospho-ribonucleoside in mRNA + H(+). In terms of biological role, decapping enzyme for NAD-capped RNAs: specifically hydrolyzes the nicotinamide adenine dinucleotide (NAD) cap from a subset of RNAs by removing the entire NAD moiety from the 5'-end of an NAD-capped RNA. The NAD-cap is present at the 5'-end of some RNAs and snoRNAs. In contrast to the canonical 5'-end N7 methylguanosine (m7G) cap, the NAD cap promotes mRNA decay. Preferentially acts on NAD-capped transcripts in response to environmental stress. Also acts as a non-canonical decapping enzyme that removes the entire cap structure of m7G capped or incompletely capped RNAs and mediates their subsequent degradation. Specifically degrades pre-mRNAs with a defective 5'-end m7G cap and is part of a pre-mRNA capping quality control. Has decapping activity toward incomplete 5'-end m7G cap mRNAs such as unmethylated 5'-end-capped RNA (cap0), while it has no activity toward 2'-O-ribose methylated m7G cap (cap1). In contrast to canonical decapping enzymes DCP2 and NUDT16, which cleave the cap within the triphosphate linkage, the decapping activity releases the entire cap structure GpppN and a 5'-end monophosphate RNA. Also has 5'-3' exoribonuclease activities: The 5'-end monophosphate RNA is then degraded by the 5'-3' exoribonuclease activity, enabling this enzyme to decap and degrade incompletely capped mRNAs. Also possesses RNA 5'-pyrophosphohydrolase activity by hydrolyzing the 5'-end triphosphate to release pyrophosphates. Exhibits decapping activity towards FAD-capped RNAs. Exhibits decapping activity towards dpCoA-capped RNAs in vitro. The polypeptide is Decapping and exoribonuclease protein (Bos taurus (Bovine)).